The chain runs to 95 residues: Large ribosomal subunit protein uL23 (95 aa).

This sequence belongs to the universal ribosomal protein uL23 family. As to quaternary structure, part of the 50S ribosomal subunit. Contacts protein L29, and trigger factor when it is bound to the ribosome.

Its function is as follows. One of the early assembly proteins it binds 23S rRNA. One of the proteins that surrounds the polypeptide exit tunnel on the outside of the ribosome. Forms the main docking site for trigger factor binding to the ribosome. In Levilactobacillus brevis (strain ATCC 367 / BCRC 12310 / CIP 105137 / JCM 1170 / LMG 11437 / NCIMB 947 / NCTC 947) (Lactobacillus brevis), this protein is Large ribosomal subunit protein uL23.